We begin with the raw amino-acid sequence, 237 residues long: Neural retina-specific leucine zipper protein (237 aa).

Glycyl lysine isopeptide (Lys-Gly) (interchain with G-Cter in SUMO) cross-links involve residues lysine 20 and lysine 24. A disordered region spans residues 23–57; that stretch reads VKREPSEGRPGPPTASLGSTPYSSVPPSPTFSEPG. The segment at 30–93 is minimal transactivation domain (MTD); it reads GRPGPPTASL…AGEALGLSPE (64 aa). Residues 159–185 form a basic motif region; sequence RLKQRRRTLKNRGYAQACRSKRLQQRR. Residues 159–222 form the bZIP domain; the sequence is RLKQRRRTLK…DLYKARCDRL (64 aa). The tract at residues 187-208 is leucine-zipper; that stretch reads LEAERARLAAQLDALRAEVARL.

It belongs to the bZIP family. In terms of assembly, interacts with FIZ1; this interaction represses transactivation. Interacts (via the leucine-zipper domain) with CRX. In terms of processing, phosphorylated. Disumoylated at Lys-20. Sumoylation modulates the transcriptional activity of NRL on RHO and NR2E3 promoters, and is required for normal rod differentiation. Expressed in the brain and the retina. Expressed strongly in rod and cone cells (at protein level).

It is found in the cytoplasm. The protein localises to the nucleus. In terms of biological role, acts as a transcriptional activator which regulates the expression of several rod-specific genes, including RHO and PDE6B. Also functions as a transcriptional coactivator, stimulating transcription mediated by the transcription factor CRX and NR2E3. Binds to the rhodopsin promoter in a sequence-specific manner. This is Neural retina-specific leucine zipper protein (NRL) from Homo sapiens (Human).